The sequence spans 273 residues: Hydroxyethylthiazole kinase (273 aa).

M47 provides a ligand contact to substrate. The ATP site is built by R123 and T172. G199 serves as a coordination point for substrate.

It belongs to the Thz kinase family. It depends on Mg(2+) as a cofactor.

The catalysed reaction is 5-(2-hydroxyethyl)-4-methylthiazole + ATP = 4-methyl-5-(2-phosphooxyethyl)-thiazole + ADP + H(+). The protein operates within cofactor biosynthesis; thiamine diphosphate biosynthesis; 4-methyl-5-(2-phosphoethyl)-thiazole from 5-(2-hydroxyethyl)-4-methylthiazole: step 1/1. Functionally, catalyzes the phosphorylation of the hydroxyl group of 4-methyl-5-beta-hydroxyethylthiazole (THZ). The chain is Hydroxyethylthiazole kinase from Ruminiclostridium cellulolyticum (strain ATCC 35319 / DSM 5812 / JCM 6584 / H10) (Clostridium cellulolyticum).